The following is a 376-amino-acid chain: Penicillin V acylase (376 aa).

The first 29 residues, 1–29, serve as a signal peptide directing secretion; sequence MIKNNKRIKSTVCALSLVALTLGSAVSLA. The Nucleophile role is filled by Cys30.

Belongs to the peptidase C59 family. In terms of assembly, homotetramer. Dimer of dimers.

The protein localises to the periplasm. The enzyme catalyses a penicillin + H2O = 6-aminopenicillanate + a carboxylate. Its activity is regulated as follows. Exhibits uncharacteristic kinetic behavior, showing positive cooperativity coupled with substrate inhibition. Penicillin acylase activity is enhanced in the presence of the reducing agent DTT, indicating active sulfhydryl group in the enzyme. Also shows enhanced activity in presence of organic solvents and detergents. Inhibited largely in presence of Ag(+), Hg(2+) and Cd(2+) ions, which have strong affinities for sulfhydryl groups. Activity is also inhibited by bile salts. In terms of biological role, catalyzes the hydrolysis of penicillin V to 6-aminopenicillanate (6-APA). Shows high specificity towards penicillin V. Can use other beta-lactam substrates, including penicillin G, ampicillin, cephalexin, cloxacillin and dicloxacillin, but at a rate less than 10% of that of penicillin V. Does not show any activity with glyco- or tauro-conjugated bile salts. This chain is Penicillin V acylase, found in Pectobacterium atrosepticum (strain SCRI 1043 / ATCC BAA-672) (Erwinia carotovora subsp. atroseptica).